A 297-amino-acid chain; its full sequence is 4-hydroxy-tetrahydrodipicolinate synthase (297 aa).

Threonine 49 is a pyruvate binding site. Residue tyrosine 137 is the Proton donor/acceptor of the active site. Lysine 166 acts as the Schiff-base intermediate with substrate in catalysis. Residue isoleucine 208 coordinates pyruvate.

This sequence belongs to the DapA family. In terms of assembly, homotetramer; dimer of dimers.

The protein resides in the cytoplasm. It catalyses the reaction L-aspartate 4-semialdehyde + pyruvate = (2S,4S)-4-hydroxy-2,3,4,5-tetrahydrodipicolinate + H2O + H(+). Its pathway is amino-acid biosynthesis; L-lysine biosynthesis via DAP pathway; (S)-tetrahydrodipicolinate from L-aspartate: step 3/4. Its function is as follows. Catalyzes the condensation of (S)-aspartate-beta-semialdehyde [(S)-ASA] and pyruvate to 4-hydroxy-tetrahydrodipicolinate (HTPA). The polypeptide is 4-hydroxy-tetrahydrodipicolinate synthase (Porphyromonas gingivalis (strain ATCC 33277 / DSM 20709 / CIP 103683 / JCM 12257 / NCTC 11834 / 2561)).